The chain runs to 291 residues: Porphobilinogen deaminase (291 aa).

Cys237 carries the S-(dipyrrolylmethanemethyl)cysteine modification.

This sequence belongs to the HMBS family. As to quaternary structure, monomer. Dipyrromethane is required as a cofactor.

The enzyme catalyses 4 porphobilinogen + H2O = hydroxymethylbilane + 4 NH4(+). The protein operates within porphyrin-containing compound metabolism; protoporphyrin-IX biosynthesis; coproporphyrinogen-III from 5-aminolevulinate: step 2/4. Its function is as follows. Tetrapolymerization of the monopyrrole PBG into the hydroxymethylbilane pre-uroporphyrinogen in several discrete steps. This chain is Porphobilinogen deaminase, found in Clostridium perfringens (strain 13 / Type A).